A 523-amino-acid polypeptide reads, in one-letter code: BTB/POZ domain-containing protein 3 (523 aa).

The ANK repeat unit spans residues 85 to 114 (FDYSPLVLASLCGHEPVVKFLLENGALCER). BTB domains are found at residues 167 to 223 (TDIV…RYLY) and 306 to 373 (HDAY…DIAP).

Interacts with cul3. Ubiquitinated and targeted for cul3-dependent degradation.

It is found in the cytoplasm. The protein operates within protein modification; protein ubiquitination. Probable substrate-specific adapter of an E3 ubiquitin-protein ligase complex which mediates the ubiquitination and subsequent proteasomal degradation of target proteins. The polypeptide is BTB/POZ domain-containing protein 3 (btb3) (Schizosaccharomyces pombe (strain 972 / ATCC 24843) (Fission yeast)).